We begin with the raw amino-acid sequence, 311 residues long: Short chain dehydrogenase opdN (311 aa).

Positions 48, 73, 96, 123, 217, and 221 each coordinate NADP(+). Tyr-217 functions as the Proton donor in the catalytic mechanism. The active-site Lowers pKa of active site Tyr is Lys-221.

The protein belongs to the short-chain dehydrogenases/reductases (SDR) family.

The protein operates within secondary metabolite biosynthesis. In terms of biological role, short chain dehydrogenase; part of the gene cluster that mediates the biosynthesis of oxopyrrolidines, polyketide-amino acid hybrid compounds with feature structures of tetramic acid. Does not seem to play a role in oxopyrrolidines A and B biosynthesis. May be involved in further modifications of these oxopyrrolidines. The sequence is that of Short chain dehydrogenase opdN from Penicillium oxalicum (strain 114-2 / CGMCC 5302) (Penicillium decumbens).